Here is a 952-residue protein sequence, read N- to C-terminus: UvrABC system protein A (952 aa).

38–45 (GLSGSGKS) contacts ATP. The C4-type zinc-finger motif lies at 258–285 (CNECGFSIPELEPRFFSFNSPVGACKSC). 2 consecutive ABC transporter domains span residues 315-596 (FRSV…KKSI) and 616-945 (GNGK…LFLE). Residue 648 to 655 (GVSGSGKS) participates in ATP binding. A C4-type zinc finger spans residues 747 to 773 (CENCSGDGLIKIEMHFLPDVFVKCESC).

The protein belongs to the ABC transporter superfamily. UvrA family. In terms of assembly, forms a heterotetramer with UvrB during the search for lesions.

It is found in the cytoplasm. The UvrABC repair system catalyzes the recognition and processing of DNA lesions. UvrA is an ATPase and a DNA-binding protein. A damage recognition complex composed of 2 UvrA and 2 UvrB subunits scans DNA for abnormalities. When the presence of a lesion has been verified by UvrB, the UvrA molecules dissociate. This Malacoplasma penetrans (strain HF-2) (Mycoplasma penetrans) protein is UvrABC system protein A.